An 87-amino-acid polypeptide reads, in one-letter code: Acyl-CoA-binding protein (87 aa).

Ser-2 is subject to N-acetylserine. One can recognise an ACB domain in the interval Ser-2 to Ile-87. At Lys-8 the chain carries N6-acetyllysine; alternate. Position 8 is an N6-succinyllysine; alternate (Lys-8). Lys-14 lines the an acyl-CoA pocket. Lys-17 bears the N6-succinyllysine mark. Phosphotyrosine is present on Tyr-29. An acyl-CoA is bound by residues Tyr-29 to Lys-33, Lys-51, Lys-55, and Tyr-74. Position 51 is an N6-acetyllysine (Lys-51). Lys-55 carries the post-translational modification N6-acetyllysine; alternate. At Lys-55 the chain carries N6-succinyllysine; alternate. The residue at position 55 (Lys-55) is an N6-(2-hydroxyisobutyryl)lysine; alternate. Lys-55 bears the N6-malonyllysine; alternate mark. Lys-77 is subject to N6-acetyllysine; alternate. Lys-77 carries the N6-succinyllysine; alternate modification.

The protein belongs to the ACBP family. As to quaternary structure, monomer.

The protein localises to the endoplasmic reticulum. The protein resides in the golgi apparatus. Functionally, binds medium- and long-chain acyl-CoA esters with very high affinity and may function as an intracellular carrier of acyl-CoA esters. It is also able to displace diazepam from the benzodiazepine (BZD) recognition site located on the GABA type A receptor. It is therefore possible that this protein also acts as a neuropeptide to modulate the action of the GABA receptor. This chain is Acyl-CoA-binding protein (Dbi), found in Rattus norvegicus (Rat).